Consider the following 166-residue polypeptide: Transcription factor HES-5 (166 aa).

The bHLH domain maps to 16 to 72 (KNRLRKPVVEKMRRDRINSSIEQLKLLLEQEFARHQPNSKLEKADILEMAVSYLKHS). One can recognise an Orange domain in the interval 88–119 (YSEGYSWCLQEAVQFLTLHAASDTQMKLLYHF). Residues 125–166 (PAAPVKETPTPGAAPQPARSSTKAAASVSTSRQSACGLWRPW) are disordered. Residues 142 to 156 (ARSSTKAAASVSTSR) are compositionally biased toward low complexity. The WRPW motif signature appears at 163–166 (WRPW).

In terms of assembly, transcription repression requires formation of a complex with a corepressor protein of the Groucho/TLE family. In terms of tissue distribution, expressed predominantly in embryonic neural lineage cells.

Its subcellular location is the nucleus. Its function is as follows. Transcriptional repressor of genes that require a bHLH protein for their transcription. Plays an important role as neurogenesis negative regulator. In Rattus norvegicus (Rat), this protein is Transcription factor HES-5 (Hes5).